The primary structure comprises 582 residues: Potassium voltage-gated channel subfamily KQT member 1 (582 aa).

The Cytoplasmic segment spans residues 1–31 (RVSIYSARRPLLARTHIQGRVYNFLERPTGW). Residues 32-53 (KCFVYHFAVFLIVLVCLIFSVL) form a helical membrane-spanning segment. Residues 54-64 (STIEQYVALAT) lie on the Extracellular side of the membrane. A helical membrane pass occupies residues 65-87 (GTLFWMEIVLVVFFGTEYVVRLW). Over 88–103 (SAGCRSKYVGVWGRLR) the chain is Cytoplasmic. Residues 104–129 (FARKPISIIDLIVVLASMVVLCVGSK) traverse the membrane as a helical segment. The Extracellular segment spans residues 130-137 (GQVFATSA). A helical; Voltage-sensor transmembrane segment spans residues 138 to 153 (IRGIRFLQILRMLHVD). An interaction with KCNE3 region spans residues 149-157 (MLHVDRQGG). The Cytoplasmic portion of the chain corresponds to 154–171 (RQGGTWRLLGSVVFIHRQ). Gln-155 is an a 1,2-diacyl-sn-glycero-3-phospho-(1D-myo-inositol-4,5-bisphosphate) binding site. The chain crosses the membrane as a helical span at residues 172 to 194 (ELITTLYIGFLGLIFSSYFVYLA). Residues 195–210 (EKDAVNESGQVEFGSY) are Extracellular-facing. The N-linked (GlcNAc...) asparagine glycan is linked to Asn-200. An intramembrane region (pore-forming) is located at residues 211-231 (ADALWWGVVTVTTIGYGDKVP). Residues 232–233 (QT) lie on the Extracellular side of the membrane. The chain crosses the membrane as a helical span at residues 234-259 (WVGKTIASCFSVFAISFFALPAGILG). Over 260–582 (SGFALKVQQK…VPRRGPEEGS (323 aa)) the chain is Cytoplasmic. The segment at 281-293 (AAASLIQTAWRCY) is interaction with CALM. Residues Ser-318 and Ser-320 each carry the phosphoserine modification. The tract at residues 426–440 (KVIRRMQYFVAKKKF) is interaction with CALM; calcium-dependent. An interaction with KCNE1 C-terminus region spans residues 446–483 (PYDVRDVIEQYSQGHLNLMVRIKELQRRLDQSIGKPSL). Positions 496–532 (SNTIGARLNRVEDKVAQLDQRLVLITDMLQQLLSLHH) form a coiled coil. Positions 499 to 527 (IGARLNRVEDKVAQLDQRLVLITDMLQQL) are interaction with AKAP9. The interval 500-531 (GARLNRVEDKVAQLDQRLVLITDMLQQLLSLH) is C-terminal assembly domain (tetramerization). Residues 530-582 (LHHGGPPGSRPPSGGGAQVQPCGPTNPELFLPGNALPTYEQLTVPRRGPEEGS) form a disordered region.

This sequence belongs to the potassium channel family. KQT (TC 1.A.1.15) subfamily. Kv7.1/KCNQ1 sub-subfamily. In terms of assembly, tetramer. Heterotetramer with KCNE1; targets to the membrane raft. Interacts (via C-terminus) with CALM; forms a heterooctameric structure (with 4:4 KCNQ1:CALM stoichiometry) in a calcium-independent manner. Interacts with AKAP9; targets protein kinase A (PKA) catalytic and regulatory subunits and protein phosphatase 1 (PP1) to the KCNQ1-KCNE1 complex, allowing PKA-mediated phosphorylation and increase of delayed rectifier potassium channel activity. Interacts with KCNE2; form a heterooligomer complex that targets to the membrane raft and leading to currents with an apparently instantaneous activation, a rapid deactivation process and a linear current-voltage relationship and decreases the amplitude of the outward current. Interacts with AP2M1; mediates estrogen-induced internalization via clathrin-coated vesicles. Interacts with NEDD4L; promotes internalization and decreases I(Ks) currents. Interacts with USP2; counteracts the NEDD4L-specific down-regulation of I(Ks) and restore plasma membrane localization. Heterotetramer with KCNQ5; has a voltage-gated potassium channel activity. Interacts with KCNE3; four KCNE3 molecules are bound to one KCNQ1 tetramer (4:4 KCNQ1:KCNE3 stoichiometry); alters membrane raft localization; affects KCNQ1 structure and gating properties. Interacts with KCNE4; impairs KCNQ1 localization in lipid rafts and inhibits voltage-gated potassium channel activity. Interacts with KCNE5; impairs KCNQ1 localization in lipid rafts and only conducts current upon strong and continued depolarization. Post-translationally, phosphorylated by PKA; increases delayed rectifier potassium channel activity of the KCNQ1-KCNE1 complex through a macromolecular complex that includes PKA, PP1, and the targeting protein AKAP9. Ubiquitinated by NEDD4L; promotes internalization. The ubiquitinylated form is internalized through a clathrin-mediated endocytosis by interacting with AP2M1 and is recycled back to the cell membrane via RAB4A and RAB11A. In terms of processing, deubiquitinated by USP2; counteracts the NEDD4L-specific down-regulation of I(Ks) and restores the membrane localization.

The protein resides in the cell membrane. Its subcellular location is the cytoplasmic vesicle membrane. It localises to the early endosome. It is found in the membrane raft. The protein localises to the endoplasmic reticulum. The protein resides in the basolateral cell membrane. It catalyses the reaction K(+)(in) = K(+)(out). Its activity is regulated as follows. PIP2 molecule is essential to activate KCNQ channels by inducing the coupling of the voltage-sensing domain (VSD) and the pore-forming domain (PD). Upon channel activation, PIP2 disrupts the VSD-calmodulin/CALM interactions, causing the release of CALM from the VSD which triggers the opening of the gate. Calcium potentiates KCNQ1 channel current through calcium-bound CALM. Calcium-bound CALM competes with PIP2 to stabilize the channel open state. Its function is as follows. Pore-forming subunit of the voltage-gated potassium (Kv) channel involved in the regulation of cardiomyocyte excitability and important in normal development and functions of myocardium, inner ear, stomach and colon. Associates with KCNE beta subunits that modulates current kinetics. Induces a voltage-dependent by rapidly activating and slowly deactivating potassium-selective outward current. Also promotes a delayed voltage activated potassium current showing outward rectification characteristic. During beta-adrenergic receptor stimulation participates in cardiac repolarization by associating with KCNE1 to form the I(Ks) cardiac potassium current that increases the amplitude and slows down the activation kinetics of outward potassium current I(Ks). Muscarinic agonist oxotremorine-M strongly suppresses KCNQ1/KCNE1 current. When associated with KCNE3, forms the potassium channel that is important for cyclic AMP-stimulated intestinal secretion of chloride ions. This interaction with KCNE3 is reduced by 17beta-estradiol, resulting in the reduction of currents. During conditions of increased substrate load, maintains the driving force for proximal tubular and intestinal sodium ions absorption, gastric acid secretion, and cAMP-induced jejunal chloride ions secretion. Allows the provision of potassium ions to the luminal membrane of the secretory canaliculus in the resting state as well as during stimulated acid secretion. When associated with KCNE2, forms a heterooligomer complex leading to currents with an apparently instantaneous activation, a rapid deactivation process and a linear current-voltage relationship and decreases the amplitude of the outward current. When associated with KCNE4, inhibits voltage-gated potassium channel activity. When associated with KCNE5, this complex only conducts current upon strong and continued depolarization. Also forms a heterotetramer with KCNQ5 that has a voltage-gated potassium channel activity. Binds with phosphatidylinositol 4,5-bisphosphate. The chain is Potassium voltage-gated channel subfamily KQT member 1 from Felis catus (Cat).